The sequence spans 264 residues: S-adenosylmethionine decarboxylase proenzyme (264 aa).

Residue S113 is the Schiff-base intermediate with substrate; via pyruvic acid of the active site. S113 carries the pyruvic acid (Ser); by autocatalysis modification. H118 (proton acceptor; for processing activity) is an active-site residue. C141 (proton donor; for catalytic activity) is an active-site residue.

Belongs to the prokaryotic AdoMetDC family. Type 2 subfamily. In terms of assembly, heterooctamer of four alpha and four beta chains arranged as a tetramer of alpha/beta heterodimers. Requires pyruvate as cofactor. Is synthesized initially as an inactive proenzyme. Formation of the active enzyme involves a self-maturation process in which the active site pyruvoyl group is generated from an internal serine residue via an autocatalytic post-translational modification. Two non-identical subunits are generated from the proenzyme in this reaction, and the pyruvate is formed at the N-terminus of the alpha chain, which is derived from the carboxyl end of the proenzyme. The post-translation cleavage follows an unusual pathway, termed non-hydrolytic serinolysis, in which the side chain hydroxyl group of the serine supplies its oxygen atom to form the C-terminus of the beta chain, while the remainder of the serine residue undergoes an oxidative deamination to produce ammonia and the pyruvoyl group blocking the N-terminus of the alpha chain.

It catalyses the reaction S-adenosyl-L-methionine + H(+) = S-adenosyl 3-(methylsulfanyl)propylamine + CO2. It functions in the pathway amine and polyamine biosynthesis; S-adenosylmethioninamine biosynthesis; S-adenosylmethioninamine from S-adenosyl-L-methionine: step 1/1. Functionally, catalyzes the decarboxylation of S-adenosylmethionine to S-adenosylmethioninamine (dcAdoMet), the propylamine donor required for the synthesis of the polyamines spermine and spermidine from the diamine putrescine. The polypeptide is S-adenosylmethionine decarboxylase proenzyme (Pseudomonas syringae pv. syringae (strain B728a)).